The primary structure comprises 485 residues: Probable cobyric acid synthase (485 aa).

Residues 250–435 (EIEIAVIRLP…LHGLFDNKNI (186 aa)) form the GATase cobBQ-type domain. Cys-328 (nucleophile) is an active-site residue. His-427 is an active-site residue.

The protein belongs to the CobB/CobQ family. CobQ subfamily.

It participates in cofactor biosynthesis; adenosylcobalamin biosynthesis. Catalyzes amidations at positions B, D, E, and G on adenosylcobyrinic A,C-diamide. NH(2) groups are provided by glutamine, and one molecule of ATP is hydrogenolyzed for each amidation. This chain is Probable cobyric acid synthase, found in Methanosarcina barkeri (strain Fusaro / DSM 804).